The sequence spans 200 residues: Small ribosomal subunit protein uS4 (200 aa).

An S4 RNA-binding domain is found at 94 to 157 (SRLDNLVFRA…QTSPQVKDAV (64 aa)).

It belongs to the universal ribosomal protein uS4 family. In terms of assembly, part of the 30S ribosomal subunit. Contacts protein S5. The interaction surface between S4 and S5 is involved in control of translational fidelity.

Functionally, one of the primary rRNA binding proteins, it binds directly to 16S rRNA where it nucleates assembly of the body of the 30S subunit. In terms of biological role, with S5 and S12 plays an important role in translational accuracy. The sequence is that of Small ribosomal subunit protein uS4 from Metamycoplasma arthritidis (strain 158L3-1) (Mycoplasma arthritidis).